Here is a 500-residue protein sequence, read N- to C-terminus: Glycerol kinase (500 aa).

T15 contacts ADP. The ATP site is built by T15, T16, and S17. T15 lines the sn-glycerol 3-phosphate pocket. R19 lines the ADP pocket. 4 residues coordinate sn-glycerol 3-phosphate: R85, E86, Y137, and D245. Residues R85, E86, Y137, D245, and Q246 each coordinate glycerol. ADP-binding residues include T267 and G310. ATP is bound by residues T267, G310, Q314, and G411. ADP-binding residues include G411 and N415.

Belongs to the FGGY kinase family.

It carries out the reaction glycerol + ATP = sn-glycerol 3-phosphate + ADP + H(+). The protein operates within polyol metabolism; glycerol degradation via glycerol kinase pathway; sn-glycerol 3-phosphate from glycerol: step 1/1. Inhibited by fructose 1,6-bisphosphate (FBP). In terms of biological role, key enzyme in the regulation of glycerol uptake and metabolism. Catalyzes the phosphorylation of glycerol to yield sn-glycerol 3-phosphate. This Aeromonas hydrophila subsp. hydrophila (strain ATCC 7966 / DSM 30187 / BCRC 13018 / CCUG 14551 / JCM 1027 / KCTC 2358 / NCIMB 9240 / NCTC 8049) protein is Glycerol kinase.